The sequence spans 129 residues: uncharacterized protein (129 aa).

It is found in the cytoplasm. The protein resides in the cytosol. Its subcellular location is the nucleus. This is an uncharacterized protein from Schizosaccharomyces pombe (strain 972 / ATCC 24843) (Fission yeast).